Reading from the N-terminus, the 412-residue chain is MKENFNISKLKNGLTVLTYNMPYVDSVAINLITKVGSRYENSEEEGISHFLEHMAFKGTTTRTAKQIAEEFDEIGGHFNAYTGHEKTIYYARVLSENCDKALNILADIIQNSIFAEEEIAKEYQVILQEIAHSQDNPDDLIYEKFYSSVYKDQPLGKPILGASKTLSSFTKEHFLSFIDKHYNAGNLYLSVAGNVDHDKIVSSAERLFSSLKQGEKSNFLPAKYIGGNSFINKDLEQTTLILGFEGTPYINLERLYRTQLLAIIFGGGMSSRLFQHIREKLGLAYAVGSYNSTYSDSGVFTIYASTAHDKLELLYKELKTEITKMTEKVNEEEMIRAKTQLRSNLLMAQEKVAYKSEEIGKNYAAFGKYIPPEEIMEIITNIKADDIINTANKIFSSITTSAIIGPNDLRGF.

Histidine 49 contacts Zn(2+). Glutamate 52 (proton acceptor) is an active-site residue. Zn(2+) contacts are provided by histidine 53 and glutamate 129.

It belongs to the peptidase M16 family. Zn(2+) is required as a cofactor.

This is an uncharacterized protein from Rickettsia felis (strain ATCC VR-1525 / URRWXCal2) (Rickettsia azadi).